The primary structure comprises 449 residues: tRNA modification GTPase MnmE (449 aa).

The (6S)-5-formyl-5,6,7,8-tetrahydrofolate site is built by arginine 24, glutamate 85, and arginine 124. Residues 220–369 enclose the TrmE-type G domain; that stretch reads GIRTAIAGPP…LEEAIIQAFS (150 aa). A K(+)-binding site is contributed by asparagine 230. Residues 230–235, 249–255, and 274–277 each bind GTP; these read NVGKSS, SNIAGTT, and DTAG. Serine 234 contributes to the Mg(2+) binding site. K(+)-binding residues include serine 249, isoleucine 251, and threonine 254. Residue threonine 255 participates in Mg(2+) binding. Lysine 449 lines the (6S)-5-formyl-5,6,7,8-tetrahydrofolate pocket.

It belongs to the TRAFAC class TrmE-Era-EngA-EngB-Septin-like GTPase superfamily. TrmE GTPase family. Homodimer. Heterotetramer of two MnmE and two MnmG subunits. It depends on K(+) as a cofactor.

Its subcellular location is the cytoplasm. Its function is as follows. Exhibits a very high intrinsic GTPase hydrolysis rate. Involved in the addition of a carboxymethylaminomethyl (cmnm) group at the wobble position (U34) of certain tRNAs, forming tRNA-cmnm(5)s(2)U34. This is tRNA modification GTPase MnmE from Akkermansia muciniphila (strain ATCC BAA-835 / DSM 22959 / JCM 33894 / BCRC 81048 / CCUG 64013 / CIP 107961 / Muc).